We begin with the raw amino-acid sequence, 456 residues long: Adenylosuccinate lyase (456 aa).

Residues 15–16, 90–92, and 122–123 contribute to the N(6)-(1,2-dicarboxyethyl)-AMP site; these read RY, NHD, and TS. His171 (proton donor/acceptor) is an active-site residue. Gln247 provides a ligand contact to N(6)-(1,2-dicarboxyethyl)-AMP. The active-site Proton donor/acceptor is Ser295. N(6)-(1,2-dicarboxyethyl)-AMP-binding positions include Ser296, 301-303, Asn309, Arg335, and 340-344; these read KVN and STVLR.

This sequence belongs to the lyase 1 family. Adenylosuccinate lyase subfamily. As to quaternary structure, homotetramer. Residues from neighboring subunits contribute catalytic and substrate-binding residues to each active site.

The catalysed reaction is N(6)-(1,2-dicarboxyethyl)-AMP = fumarate + AMP. It carries out the reaction (2S)-2-[5-amino-1-(5-phospho-beta-D-ribosyl)imidazole-4-carboxamido]succinate = 5-amino-1-(5-phospho-beta-D-ribosyl)imidazole-4-carboxamide + fumarate. Its pathway is purine metabolism; AMP biosynthesis via de novo pathway; AMP from IMP: step 2/2. The protein operates within purine metabolism; IMP biosynthesis via de novo pathway; 5-amino-1-(5-phospho-D-ribosyl)imidazole-4-carboxamide from 5-amino-1-(5-phospho-D-ribosyl)imidazole-4-carboxylate: step 2/2. In terms of biological role, catalyzes two reactions in de novo purine nucleotide biosynthesis. Catalyzes the breakdown of 5-aminoimidazole- (N-succinylocarboxamide) ribotide (SAICAR or 2-[5-amino-1-(5-phospho-beta-D-ribosyl)imidazole-4-carboxamido]succinate) to 5-aminoimidazole-4-carboxamide ribotide (AICAR or 5-amino-1-(5-phospho-beta-D-ribosyl)imidazole-4-carboxamide) and fumarate, and of adenylosuccinate (ADS or N(6)-(1,2-dicarboxyethyl)-AMP) to adenosine monophosphate (AMP) and fumarate. This chain is Adenylosuccinate lyase (purB), found in Legionella pneumophila subsp. pneumophila (strain Philadelphia 1 / ATCC 33152 / DSM 7513).